Reading from the N-terminus, the 386-residue chain is MAQIQRFFKMGSASGILLFFFALLAIIFANTSLNNFYFNFLDIPVSVQFGEFMINKTLLHWINDGFMAVFFVLVGLEVKREMLEGSLSRYQLAIFPAVAAIGGMIVPALIYYLITNQHPELSNGWAIPMATDIAFALGIVALLGTRVPLPLKVFLLALAIIDDLGAIVVIAVFFSEELSIQALSVAIVAIAGLITLNRMKVGHLCAYLIFGLILWAAVLKSGVHATLAGVIIGFCIPQKDSEGKSPLHTFEHILTPWCSFFVLPLFAFANAGVSLGTINTDMIFSTLPLGIALGLIVGKPLGVFSFSYFSVKLGIAKLPEGIKWKQVFAIAILCGIGFTMSMFLAGLAFTDGQSDSLINTLSRLGILLGSSVSAILGYLLLKSTTK.

The next 11 helical transmembrane spans lie at 10–30 (MGSA…IFAN), 58–78 (LLHW…GLEV), 94–114 (IFPA…YYLI), 124–144 (GWAI…ALLG), 154–174 (FLLA…AVFF), 176–196 (EELS…LITL), 199–219 (MKVG…AAVL), 253–273 (ILTP…NAGV), 283–303 (IFST…PLGV), 327–347 (VFAI…LAGL), and 361–381 (LSRL…YLLL).

Belongs to the NhaA Na(+)/H(+) (TC 2.A.33) antiporter family.

It localises to the cell inner membrane. It carries out the reaction Na(+)(in) + 2 H(+)(out) = Na(+)(out) + 2 H(+)(in). Functionally, na(+)/H(+) antiporter that extrudes sodium in exchange for external protons. This Mannheimia succiniciproducens (strain KCTC 0769BP / MBEL55E) protein is Na(+)/H(+) antiporter NhaA.